We begin with the raw amino-acid sequence, 284 residues long: ATP phosphoribosyltransferase (284 aa).

This sequence belongs to the ATP phosphoribosyltransferase family. Long subfamily. The cofactor is Mg(2+).

The protein localises to the cytoplasm. The enzyme catalyses 1-(5-phospho-beta-D-ribosyl)-ATP + diphosphate = 5-phospho-alpha-D-ribose 1-diphosphate + ATP. It functions in the pathway amino-acid biosynthesis; L-histidine biosynthesis; L-histidine from 5-phospho-alpha-D-ribose 1-diphosphate: step 1/9. Its activity is regulated as follows. Feedback inhibited by histidine. In terms of biological role, catalyzes the condensation of ATP and 5-phosphoribose 1-diphosphate to form N'-(5'-phosphoribosyl)-ATP (PR-ATP). Has a crucial role in the pathway because the rate of histidine biosynthesis seems to be controlled primarily by regulation of HisG enzymatic activity. In Pseudarthrobacter chlorophenolicus (strain ATCC 700700 / DSM 12829 / CIP 107037 / JCM 12360 / KCTC 9906 / NCIMB 13794 / A6) (Arthrobacter chlorophenolicus), this protein is ATP phosphoribosyltransferase.